The chain runs to 202 residues: Securin (202 aa).

Ala-2 carries the post-translational modification N-acetylalanine. The disordered stretch occupies residues Leu-35–Ala-90. Residues Arg-61–Leu-64 carry the D-box motif. Short sequence motifs (TEK-box) lie at residues Thr-71–Lys-73 and Thr-94–Lys-96. An SH3-binding motif is present at residues Pro-163–Pro-173. Phosphoserine; by CDK1 is present on Ser-165.

It belongs to the securin family. Interacts with RPS10 and DNAJA1. Interacts with the caspase-like ESPL1, and prevents its protease activity probably by covering its active site. Interacts with TP53 and blocks its activity probably by blocking its binding to DNA. Interacts with the Ku 70 kDa subunit of ds-DNA kinase. Interacts with PTTG1IP. Phosphorylated at Ser-165 by CDK1 during mitosis. In terms of processing, phosphorylated in vitro by ds-DNA kinase. Post-translationally, ubiquitinated through 'Lys-11' linkage of ubiquitin moieties by the anaphase promoting complex (APC) at the onset of anaphase, conducting to its degradation. 'Lys-11'-linked ubiquitination is mediated by the E2 ligase UBE2C/UBCH10. In terms of tissue distribution, expressed at low level in most tissues, except in adult testis, where it is highly expressed. Overexpressed in many patients suffering from pituitary adenomas, primary epithelial neoplasias, and esophageal cancer.

It localises to the cytoplasm. The protein resides in the nucleus. Its function is as follows. Regulatory protein, which plays a central role in chromosome stability, in the p53/TP53 pathway, and DNA repair. Probably acts by blocking the action of key proteins. During the mitosis, it blocks Separase/ESPL1 function, preventing the proteolysis of the cohesin complex and the subsequent segregation of the chromosomes. At the onset of anaphase, it is ubiquitinated, conducting to its destruction and to the liberation of ESPL1. Its function is however not limited to a blocking activity, since it is required to activate ESPL1. Negatively regulates the transcriptional activity and related apoptosis activity of TP53. The negative regulation of TP53 may explain the strong transforming capability of the protein when it is overexpressed. May also play a role in DNA repair via its interaction with Ku, possibly by connecting DNA damage-response pathways with sister chromatid separation. The polypeptide is Securin (PTTG1) (Homo sapiens (Human)).